We begin with the raw amino-acid sequence, 688 residues long: Glycine--tRNA ligase beta subunit (688 aa).

The protein belongs to the class-II aminoacyl-tRNA synthetase family. In terms of assembly, tetramer of two alpha and two beta subunits.

The protein resides in the cytoplasm. It catalyses the reaction tRNA(Gly) + glycine + ATP = glycyl-tRNA(Gly) + AMP + diphosphate. The chain is Glycine--tRNA ligase beta subunit from Shewanella sp. (strain MR-7).